Consider the following 390-residue polypeptide: Galactokinase (390 aa).

34–37 (EHTD) contributes to the substrate binding site. ATP-binding positions include Ser-68 and 122–128 (GSGLSSS). The Mg(2+) site is built by Ser-128 and Glu-160. Asp-172 functions as the Proton acceptor in the catalytic mechanism. Tyr-221 is a binding site for substrate.

This sequence belongs to the GHMP kinase family. GalK subfamily.

It is found in the cytoplasm. The enzyme catalyses alpha-D-galactose + ATP = alpha-D-galactose 1-phosphate + ADP + H(+). Its pathway is carbohydrate metabolism; galactose metabolism. Functionally, catalyzes the transfer of the gamma-phosphate of ATP to D-galactose to form alpha-D-galactose-1-phosphate (Gal-1-P). The protein is Galactokinase of Chloroflexus aggregans (strain MD-66 / DSM 9485).